The sequence spans 393 residues: MSDETRVGEAAEQAATPEKIRKGSARRERGNRTGFTTGACSAAAARAATLGLLLSEVPDTVICRLPNGQEQAFAVTDGCVEESSGLAHAVIIKDAGDDPDATHGAHMTADVRLLPDRAGEIVLKGGFGVGVVTKDGLGLEVGGPAINPVPRRNILDNVRAVAGELLDHDGLEVTISVPGGDEMAKKTLNARLGILGGISILGTTGIVRPYSTAAFRASVVQAVDVAAKQGQTSVVFTTGGRTEKFAMRQLPDLDESCFVQMGDFVKAAFSSAIKHKLPTVYVGAMVGKLTKMCQGLAVTHAWKAEVDRDILADSAREVGAPDDLIEEIRSAETARFAAERLASLGLAVTFHRQLAIKAIRSLKDKYPGNYRLAVLVCDFEGQFICRVNEDEAL.

A disordered region spans residues 1 to 35; it reads MSDETRVGEAAEQAATPEKIRKGSARRERGNRTGF. Positions 18 to 31 are enriched in basic and acidic residues; sequence EKIRKGSARRERGN.

Belongs to the CbiD family.

It catalyses the reaction Co-precorrin-5B + S-adenosyl-L-methionine = Co-precorrin-6A + S-adenosyl-L-homocysteine. It functions in the pathway cofactor biosynthesis; adenosylcobalamin biosynthesis; cob(II)yrinate a,c-diamide from sirohydrochlorin (anaerobic route): step 6/10. In terms of biological role, catalyzes the methylation of C-1 in cobalt-precorrin-5B to form cobalt-precorrin-6A. This chain is Cobalt-precorrin-5B C(1)-methyltransferase, found in Dechloromonas aromatica (strain RCB).